Here is a 267-residue protein sequence, read N- to C-terminus: MIAFPNAKINLGLHVIARRSDGYHDIETIFCPIDLCDILEIVSATQTKFIQSGIPMDCKVSNNLVMKAYQLLKKHYNLPEITIHLRKNIPIGAGLGGGSSDASFMLYLLSNLANLCLSIEELEAYAKQLGSDCPFFIRNKPVFAKGIGNIFTPIELDLKKYNLALVTTNIHISTSEAYTNIVVSHTPRESLTDIIHYPVDKWKNRLVNDFEEDIFPLYPEIREIKQELYNQGAIYASMSGSGSSVYGLFKKPYRPIGTFNFSIHNFI.

The active site involves Lys-8. Residue 90–100 (PIGAGLGGGSS) coordinates ATP. The active site involves Asp-132.

It belongs to the GHMP kinase family. IspE subfamily.

The enzyme catalyses 4-CDP-2-C-methyl-D-erythritol + ATP = 4-CDP-2-C-methyl-D-erythritol 2-phosphate + ADP + H(+). The protein operates within isoprenoid biosynthesis; isopentenyl diphosphate biosynthesis via DXP pathway; isopentenyl diphosphate from 1-deoxy-D-xylulose 5-phosphate: step 3/6. Catalyzes the phosphorylation of the position 2 hydroxy group of 4-diphosphocytidyl-2C-methyl-D-erythritol. This chain is 4-diphosphocytidyl-2-C-methyl-D-erythritol kinase, found in Azobacteroides pseudotrichonymphae genomovar. CFP2.